The chain runs to 441 residues: Amino-acid acetyltransferase (441 aa).

In terms of domain architecture, N-acetyltransferase spans 295 to 434 (EQVRRATIND…QALYNYQRRS (140 aa)).

Belongs to the acetyltransferase family. ArgA subfamily. Homohexamer.

Its subcellular location is the cytoplasm. It catalyses the reaction L-glutamate + acetyl-CoA = N-acetyl-L-glutamate + CoA + H(+). The protein operates within amino-acid biosynthesis; L-arginine biosynthesis; N(2)-acetyl-L-ornithine from L-glutamate: step 1/4. The protein is Amino-acid acetyltransferase of Pectobacterium carotovorum subsp. carotovorum (strain PC1).